Reading from the N-terminus, the 347-residue chain is uncharacterized protein (347 aa).

Coiled-coil stretches lie at residues 148–201 and 261–298; these read DQQS…EKDG and LENL…DTFS. Positions 151 to 203 are disordered; sequence SISNLRKEEKEKQKENENENENENENENENEKENQELDKKVNQTNDNEKDGDE. Residues 155–167 are compositionally biased toward basic and acidic residues; that stretch reads LRKEEKEKQKENE. Residues 168–178 show a composition bias toward acidic residues; it reads NENENENENEN. A compositionally biased stretch (basic and acidic residues) spans 179 to 191; the sequence is ENEKENQELDKKV.

This is an uncharacterized protein from Dictyostelium discoideum (Social amoeba).